Reading from the N-terminus, the 181-residue chain is MTGGLRDGEKEEEFLHSPFIRKQGNIYKPYNKDMDYDILNEKSMEDVHTKEIDLVNRDPTHLNDDVVKVDFEDVIAEPAGTYSFDGVWKASFTTFTVTKYWCYRLLTALVGIPLALIWGIFFAILSFIHIWAVVPCVKSYLIEIHCISRVYSICVHTFCDPLFEAMGKCLGGVRIRTSKEV.

Residues 1–107 lie on the Cytoplasmic side of the membrane; the sequence is MTGGLRDGEK…TKYWCYRLLT (107 aa). An intramembrane region (helical) is located at residues 108-128; the sequence is ALVGIPLALIWGIFFAILSFI. Topologically, residues 129–181 are cytoplasmic; that stretch reads HIWAVVPCVKSYLIEIHCISRVYSICVHTFCDPLFEAMGKCLGGVRIRTSKEV. S-palmitoyl cysteine attachment occurs at residues Cys-136, Cys-146, and Cys-159.

It belongs to the caveolin family. In terms of assembly, homooligomer.

The protein localises to the golgi apparatus membrane. It is found in the cell membrane. The protein resides in the membrane. Its subcellular location is the caveola. It localises to the membrane raft. In terms of biological role, may act as a positive regulator of T-cell coactivation. May act as a scaffolding protein within caveolar membranes. Interacts directly with G-protein alpha subunits and can functionally regulate their activity. This chain is Caveolin-1 (cav1), found in Takifugu rubripes (Japanese pufferfish).